A 395-amino-acid chain; its full sequence is Sulfate adenylyltransferase (395 aa).

It belongs to the sulfate adenylyltransferase family.

The enzyme catalyses sulfate + ATP + H(+) = adenosine 5'-phosphosulfate + diphosphate. It participates in sulfur metabolism; hydrogen sulfide biosynthesis; sulfite from sulfate: step 1/3. The sequence is that of Sulfate adenylyltransferase from Synechococcus elongatus (strain ATCC 33912 / PCC 7942 / FACHB-805) (Anacystis nidulans R2).